Consider the following 382-residue polypeptide: Rubredoxin-NAD(+) reductase (382 aa).

FAD contacts are provided by residues 9–12 (TGLA), 33–34 (TA), Lys-42, Val-80, Glu-156, Asp-275, Val-287, and Lys-318.

Belongs to the FAD-dependent oxidoreductase family. In terms of assembly, homodimer. The cofactor is FAD.

It is found in the cytoplasm. The enzyme catalyses 2 reduced [rubredoxin] + NAD(+) + H(+) = 2 oxidized [rubredoxin] + NADH. It participates in hydrocarbon metabolism; alkane degradation. In terms of biological role, involved in the hydrocarbon hydroxylating system, which transfers electrons from NADH to rubredoxin reductase and then through rubredoxin to alkane 1 monooxygenase. In Alcanivorax borkumensis (strain ATCC 700651 / DSM 11573 / NCIMB 13689 / SK2), this protein is Rubredoxin-NAD(+) reductase (rubB).